The sequence spans 104 residues: MGKLTLLLLVLLGWLQYSLWLGKNGIHDYTRVDEDVASQQGNNAKLKARNDRLFAEIDDLNGGSEAIEERARNELGMIKPGETFYRLVPDQNRRNAQQGRPASQ.

Residues 1-3 lie on the Cytoplasmic side of the membrane; the sequence is MGK. The helical transmembrane segment at 4-21 threads the bilayer; sequence LTLLLLVLLGWLQYSLWL. Over 22 to 104 the chain is Periplasmic; that stretch reads GKNGIHDYTR…NAQQGRPASQ (83 aa). Positions 33–62 form a coiled coil; it reads DEDVASQQGNNAKLKARNDRLFAEIDDLNG.

It belongs to the FtsB family. As to quaternary structure, part of a complex composed of FtsB, FtsL and FtsQ.

It localises to the cell inner membrane. Functionally, essential cell division protein. May link together the upstream cell division proteins, which are predominantly cytoplasmic, with the downstream cell division proteins, which are predominantly periplasmic. The protein is Cell division protein FtsB of Erwinia tasmaniensis (strain DSM 17950 / CFBP 7177 / CIP 109463 / NCPPB 4357 / Et1/99).